The primary structure comprises 37 residues: Large ribosomal subunit protein bL36 (37 aa).

This sequence belongs to the bacterial ribosomal protein bL36 family.

This is Large ribosomal subunit protein bL36 from Treponema pallidum (strain Nichols).